Consider the following 205-residue polypeptide: N-(5'-phosphoribosyl)anthranilate isomerase (205 aa).

Belongs to the TrpF family.

It carries out the reaction N-(5-phospho-beta-D-ribosyl)anthranilate = 1-(2-carboxyphenylamino)-1-deoxy-D-ribulose 5-phosphate. It participates in amino-acid biosynthesis; L-tryptophan biosynthesis; L-tryptophan from chorismate: step 3/5. The sequence is that of N-(5'-phosphoribosyl)anthranilate isomerase from Acidithiobacillus ferrooxidans (strain ATCC 23270 / DSM 14882 / CIP 104768 / NCIMB 8455) (Ferrobacillus ferrooxidans (strain ATCC 23270)).